Consider the following 361-residue polypeptide: sn-glycerol-3-phosphate import ATP-binding protein UgpC (361 aa).

The 232-residue stretch at 4–235 folds into the ABC transporter domain; it reads LSLKGIRKSY…PETVFVAGFI (232 aa). ATP is bound at residue 37–44; sequence GPSGCGKS.

The protein belongs to the ABC transporter superfamily. sn-glycerol-3-phosphate importer (TC 3.A.1.1.3) family. In terms of assembly, the complex is composed of two ATP-binding proteins (UgpC), two transmembrane proteins (UgpA and UgpE) and a solute-binding protein (UgpB).

The protein resides in the cell inner membrane. The enzyme catalyses sn-glycerol 3-phosphate(out) + ATP + H2O = sn-glycerol 3-phosphate(in) + ADP + phosphate + H(+). Its function is as follows. Part of the ABC transporter complex UgpBAEC involved in sn-glycerol-3-phosphate (G3P) import. Responsible for energy coupling to the transport system. This is sn-glycerol-3-phosphate import ATP-binding protein UgpC from Burkholderia ambifaria (strain ATCC BAA-244 / DSM 16087 / CCUG 44356 / LMG 19182 / AMMD) (Burkholderia cepacia (strain AMMD)).